The chain runs to 864 residues: Bifunctional uridylyltransferase/uridylyl-removing enzyme (864 aa).

A uridylyltransferase region spans residues 1–328 (MLFPYFPLSE…QTNEPVQVRL (328 aa)). Positions 329-686 (LDKEFQCVNN…ISNRFSEGGT (358 aa)) are uridylyl-removing. In terms of domain architecture, HD spans 446–562 (VDEHIVRTLL…LHFAEAVQNN (117 aa)). 2 consecutive ACT domains span residues 687–766 (EIFV…TFRA) and 793–864 (EMEL…LEPK).

Belongs to the GlnD family. Mg(2+) is required as a cofactor.

It catalyses the reaction [protein-PII]-L-tyrosine + UTP = [protein-PII]-uridylyl-L-tyrosine + diphosphate. The catalysed reaction is [protein-PII]-uridylyl-L-tyrosine + H2O = [protein-PII]-L-tyrosine + UMP + H(+). With respect to regulation, uridylyltransferase (UTase) activity is inhibited by glutamine, while glutamine activates uridylyl-removing (UR) activity. Its function is as follows. Modifies, by uridylylation and deuridylylation, the PII regulatory proteins (GlnB and homologs), in response to the nitrogen status of the cell that GlnD senses through the glutamine level. Under low glutamine levels, catalyzes the conversion of the PII proteins and UTP to PII-UMP and PPi, while under higher glutamine levels, GlnD hydrolyzes PII-UMP to PII and UMP (deuridylylation). Thus, controls uridylylation state and activity of the PII proteins, and plays an important role in the regulation of nitrogen assimilation and metabolism. The sequence is that of Bifunctional uridylyltransferase/uridylyl-removing enzyme from Pasteurella multocida (strain Pm70).